A 76-amino-acid polypeptide reads, in one-letter code: uncharacterized protein (76 aa).

The helical transmembrane segment at 24-44 (GAIFLVCYPLYCVVCFVSVLC) threads the bilayer.

It is found in the membrane. This is an uncharacterized protein from Schizosaccharomyces pombe (strain 972 / ATCC 24843) (Fission yeast).